A 150-amino-acid chain; its full sequence is Large ribosomal subunit protein bL9 (150 aa).

Belongs to the bacterial ribosomal protein bL9 family.

In terms of biological role, binds to the 23S rRNA. The polypeptide is Large ribosomal subunit protein bL9 (Vibrio campbellii (strain ATCC BAA-1116)).